Reading from the N-terminus, the 80-residue chain is Probable small nuclear ribonucleoprotein G (80 aa).

The Sm domain occupies 5 to 76; it reads GQPPDLKKYM…IVTVEALEPV (72 aa).

The protein belongs to the snRNP Sm proteins family.

The protein resides in the nucleus. Its function is as follows. Probable common Sm protein, is found in U1 and U2 snRNPs and may be part of the spliceosome. The polypeptide is Probable small nuclear ribonucleoprotein G (Arabidopsis thaliana (Mouse-ear cress)).